A 159-amino-acid chain; its full sequence is 3-hydroxyacyl-[acyl-carrier-protein] dehydratase FabZ (159 aa).

The active site involves His-58.

Belongs to the thioester dehydratase family. FabZ subfamily.

The protein localises to the cytoplasm. It catalyses the reaction a (3R)-hydroxyacyl-[ACP] = a (2E)-enoyl-[ACP] + H2O. Involved in unsaturated fatty acids biosynthesis. Catalyzes the dehydration of short chain beta-hydroxyacyl-ACPs and long chain saturated and unsaturated beta-hydroxyacyl-ACPs. The chain is 3-hydroxyacyl-[acyl-carrier-protein] dehydratase FabZ from Helicobacter pylori (strain P12).